The sequence spans 707 residues: MNYSLFISCAKGLEYLLEDELKGLGLHVTQVSPQGVYGEASLPVIYNLCLWSRLANRIQLILFSGHAAKEQAVHQLCTDFHWQTVFTHDKTIAIEFHGASEQIRNTMFGAQIVKDGIVDHFRRLNGSRPSVDKEKPQILIHAHLKNDILTVSFDLVGYSLHQRGYRKKAGKAPLKENVAAAMLLRAKWPELAAQGYGLHDPFCGSGTLVIEAAMMAAHIAPGLLRQDQSLQYWARHQSSLWEKLRTQALQQVKPLAVKLVGTDTDSKVVALARSNAERAGVLPLVEFNTLSLNACRPGTKRGLVVCNPPYGERLGEVTQLVPLYQQLGTTLHTCYQGWQAAILTSSPVLAKALGLRADKQYTLYNGPLECKLYCLTLSAANKLKNTPNAPLSDNAQMLFNRLEKNRNHLQKWARKNQITCYRIYDADLPEYAYAIDIYNDYAVLQEYAPPASIPVHKAEKRSLEMLQVVPRALGIHPEKLIVKQRKQQKGSEQYQKIGKTSQRQIVTEGKAKLIVNLYDYLDTGLFLDHRLMRLKFAQLEQGTRFLNCFCYTASASVHAALAGALTTNVDLSKTYLLWAEDNFRLNDINLSKHQFLQYDCKEWMKTTRDKFDVIFLDPPSFSNSKRMSDILDIQRDHVSLINMAMRLLNPDGVLYFSTNLRQFKLEPMLKEKYAVQDITPQTIDQDFKRNSKIHHCFKIVMPHFADN.

The THUMP domain maps to 44–155; sequence VIYNLCLWSR…NDILTVSFDL (112 aa).

The protein belongs to the methyltransferase superfamily. RlmKL family.

Its subcellular location is the cytoplasm. The catalysed reaction is guanosine(2445) in 23S rRNA + S-adenosyl-L-methionine = N(2)-methylguanosine(2445) in 23S rRNA + S-adenosyl-L-homocysteine + H(+). It carries out the reaction guanosine(2069) in 23S rRNA + S-adenosyl-L-methionine = N(2)-methylguanosine(2069) in 23S rRNA + S-adenosyl-L-homocysteine + H(+). Its function is as follows. Specifically methylates the guanine in position 2445 (m2G2445) and the guanine in position 2069 (m7G2069) of 23S rRNA. This Legionella pneumophila (strain Lens) protein is Ribosomal RNA large subunit methyltransferase K/L.